Consider the following 366-residue polypeptide: Zinc-regulated GTPase metalloprotein activator 1 (366 aa).

The psi-PxLVp motif motif lies at 5-12 (DECPELVP). Residue 31 to 38 (GYLGAGKT) coordinates GTP. Residues Cys89, Cys91, and Cys92 each coordinate Zn(2+). The short motif at 89–92 (CLCC) is the CXCC motif element. GTP-binding positions include 92–96 (CSVKD) and 185–188 (NKTD). In terms of domain architecture, CobW C-terminal spans 258 to 357 (TITFEVPGSV…GEILKKEFIS (100 aa)).

This sequence belongs to the SIMIBI class G3E GTPase family. ZNG1 subfamily.

The protein resides in the nucleus. It catalyses the reaction GTP + H2O = GDP + phosphate + H(+). Functionally, zinc chaperone that directly transfers zinc cofactor to target metalloproteins, thereby activating them. Catalyzes zinc insertion into the active site of methionine aminopeptidase METAP1, which function to cleave the initiator methionine from polypeptides during or after protein translation. Mechanistically, the N-terminal psi-PxLVp motif binds to the C6H2-type zinc finger of inactive form of METAP1. After formation of the docked complex, zinc is transferred from the CXCC motif in the GTPase domain of ZNG1 to the zinc binding site in the peptidase domain of METAP1 in a process requiring GTP hydrolysis. GTP/GDP exchange is required for release of active METAP1. This chain is Zinc-regulated GTPase metalloprotein activator 1, found in Danio rerio (Zebrafish).